The sequence spans 98 residues: Cysteine-rich and transmembrane domain-containing protein WIH2 (98 aa).

Residues 1-77 form a disordered region; the sequence is MSQYNQPPVG…PPQHQQQQSS (77 aa). The segment covering 9–21 has biased composition (pro residues); it reads VGVPPPQGYPPEG. Residues 37 to 55 show a composition bias toward low complexity; that stretch reads YPQQGYPPQGYPQQGYPQQ. Residues 56 to 70 are compositionally biased toward pro residues; it reads GYPPPYAPQYPPPPQ. The helical transmembrane segment at 75 to 92 threads the bilayer; the sequence is QSSPGFLEGCLAALCCCC.

The protein belongs to the CYSTM1 family. As to expression, expressed in floral organ primordia.

The protein localises to the membrane. Required for the promotion of megasporogenesis, or promotion of germ cell formation from somatic precursor cells. Acts redundantly with WIH1. Functions in a genetic pathway downstream of SPL/NZZ and WUS and together with TRN2 in promoting megasporogenesis. This is Cysteine-rich and transmembrane domain-containing protein WIH2 from Arabidopsis thaliana (Mouse-ear cress).